We begin with the raw amino-acid sequence, 391 residues long: Putative ABC transporter glucose-binding protein TsgA13 (391 aa).

The N-terminal stretch at 1–28 is a signal peptide; that stretch reads MLDEESSIQRRDVLSALGAAGVTTLAGC. The disordered stretch occupies residues 24-71; the sequence is TLAGCTGGDTGDTDDTEASETTASEGTTSGTTTGDVETTDGGGPSEGE. Residues 42 to 59 are compositionally biased toward low complexity; that stretch reads SETTASEGTTSGTTTGDV.

The protein belongs to the BMP lipoprotein family. As to quaternary structure, the complex is composed of two ATP-binding proteins (TsgD13), two transmembrane proteins (TsgB13 and TsgC13) and a solute-binding protein (TsgA13).

Part of an ABC transporter complex involved in glucose import. This chain is Putative ABC transporter glucose-binding protein TsgA13 (tsgA13), found in Haloferax volcanii (strain ATCC 29605 / DSM 3757 / JCM 8879 / NBRC 14742 / NCIMB 2012 / VKM B-1768 / DS2) (Halobacterium volcanii).